A 123-amino-acid chain; its full sequence is Small ribosomal subunit protein uS12 (123 aa).

Aspartate 89 bears the 3-methylthioaspartic acid mark. The disordered stretch occupies residues 104-123; it reads SVGVKDRKKSRSKYGAKRPK. Over residues 109-123 the composition is skewed to basic residues; sequence DRKKSRSKYGAKRPK.

Belongs to the universal ribosomal protein uS12 family. In terms of assembly, part of the 30S ribosomal subunit. Contacts proteins S8 and S17. May interact with IF1 in the 30S initiation complex.

In terms of biological role, with S4 and S5 plays an important role in translational accuracy. Functionally, interacts with and stabilizes bases of the 16S rRNA that are involved in tRNA selection in the A site and with the mRNA backbone. Located at the interface of the 30S and 50S subunits, it traverses the body of the 30S subunit contacting proteins on the other side and probably holding the rRNA structure together. The combined cluster of proteins S8, S12 and S17 appears to hold together the shoulder and platform of the 30S subunit. The sequence is that of Small ribosomal subunit protein uS12 from Geotalea daltonii (strain DSM 22248 / JCM 15807 / FRC-32) (Geobacter daltonii).